We begin with the raw amino-acid sequence, 199 residues long: Phosphoserine phosphatase RsbX (199 aa).

The PPM-type phosphatase domain occupies 11–198 (QTLVYQLNKE…DDLTYILGQL (188 aa)).

The enzyme catalyses O-phospho-L-serine + H2O = L-serine + phosphate. The catalysed reaction is O-phospho-D-serine + H2O = D-serine + phosphate. Functionally, negative regulator of sigma-B activity. Dephosphorylates RsbS. Plays a role both in maintaining low sigma-B activity during growth and in reestablishing prestress sigma-B activity after induction. Could have a negative feedback role by indirectly communicating sigma-B protein levels. The protein is Phosphoserine phosphatase RsbX (rsbX) of Bacillus subtilis (strain 168).